The following is a 462-amino-acid chain: Metacaspase-1 (462 aa).

Residues 1–21 (MSYYPPPSGYPGGPPAYPPPQ) show a composition bias toward pro residues. The segment at 1–150 (MSYYPPPSGY…PPPPSGSVAF (150 aa)) is disordered. The segment covering 22-33 (QQQQQQQQYPSY) has biased composition (low complexity). Composition is skewed to pro residues over residues 49–69 (PSYP…PPHS) and 77–102 (SPQP…PPSP). Catalysis depends on residues His-253 and Cys-309.

It belongs to the peptidase C14B family.

Its function is as follows. Involved in cell death (apoptosis). This is Metacaspase-1 (MCA1) from Coccidioides immitis (strain RS) (Valley fever fungus).